The primary structure comprises 309 residues: MRHFLTLNDLDKNEILDILSLAKDIKKEAKSRNYISYLKDQTLAMIFEKSSTRTRVSFEVGIHQLGGKGLFLSSRDIQLGRGEPVKDTARVLGRMVDMIMARVYKQSDLEELAKFSGVPVINGLSDDFHPVQLMSDLLTLSELGLNLQTMKVAYVGDGNNMTNSWLMAASKLGFELRVATPKGYEVPQWVLDIAKQNSKISCANLIITDNPKAAISGADVVTTDTWVSMGQEDEKEKRINDFAGYCVDDDMMSLAAKDAKFLHCLPAYRGYEVSEAVFEAHAGEIFSEAENRLHAQKAVMVWCDRKRYE.

Carbamoyl phosphate is bound by residues 51–54, Gln78, Arg102, and 129–132; these read STRT and HPVQ. L-ornithine-binding positions include Asn160, Asp224, and 228–229; that span reads SM. Residues 264–265 and Arg292 contribute to the carbamoyl phosphate site; that span reads CL.

Belongs to the aspartate/ornithine carbamoyltransferase superfamily. OTCase family.

It localises to the cytoplasm. It carries out the reaction carbamoyl phosphate + L-ornithine = L-citrulline + phosphate + H(+). It functions in the pathway amino-acid biosynthesis; L-arginine biosynthesis; L-arginine from L-ornithine and carbamoyl phosphate: step 1/3. In terms of biological role, reversibly catalyzes the transfer of the carbamoyl group from carbamoyl phosphate (CP) to the N(epsilon) atom of ornithine (ORN) to produce L-citrulline. In Campylobacter fetus subsp. fetus (strain 82-40), this protein is Ornithine carbamoyltransferase.